The primary structure comprises 290 residues: Bifunctional protein FolD (290 aa).

Residues 167–169, serine 192, and isoleucine 233 each bind NADP(+); that span reads GRS.

It belongs to the tetrahydrofolate dehydrogenase/cyclohydrolase family. Homodimer.

The enzyme catalyses (6R)-5,10-methylene-5,6,7,8-tetrahydrofolate + NADP(+) = (6R)-5,10-methenyltetrahydrofolate + NADPH. The catalysed reaction is (6R)-5,10-methenyltetrahydrofolate + H2O = (6R)-10-formyltetrahydrofolate + H(+). It participates in one-carbon metabolism; tetrahydrofolate interconversion. In terms of biological role, catalyzes the oxidation of 5,10-methylenetetrahydrofolate to 5,10-methenyltetrahydrofolate and then the hydrolysis of 5,10-methenyltetrahydrofolate to 10-formyltetrahydrofolate. This Azorhizobium caulinodans (strain ATCC 43989 / DSM 5975 / JCM 20966 / LMG 6465 / NBRC 14845 / NCIMB 13405 / ORS 571) protein is Bifunctional protein FolD.